The chain runs to 160 residues: Epithelial membrane protein 1 (160 aa).

Residues 1 to 21 (MLVLLAGLFVVHIATAIMLFV) traverse the membrane as a helical segment. N-linked (GlcNAc...) asparagine glycans are attached at residues N35 and N43. 2 helical membrane passes run 67 to 87 (FMILSIIFSIISLVVFVFQLF) and 95 to 115 (FFLSGSTMLVCWLCILVGVSI). N-linked (GlcNAc...) asparagine glycosylation occurs at N128. Residues 137–157 (FILTWICFCFSFIIGILYMVL) traverse the membrane as a helical segment.

The protein belongs to the PMP-22/EMP/MP20 family.

The protein localises to the membrane. This is Epithelial membrane protein 1 (Emp1) from Mus musculus (Mouse).